A 115-amino-acid polypeptide reads, in one-letter code: Large ribosomal subunit protein bL19 (115 aa).

This sequence belongs to the bacterial ribosomal protein bL19 family.

Functionally, this protein is located at the 30S-50S ribosomal subunit interface and may play a role in the structure and function of the aminoacyl-tRNA binding site. The sequence is that of Large ribosomal subunit protein bL19 from Francisella tularensis subsp. tularensis (strain WY96-3418).